Here is a 102-residue protein sequence, read N- to C-terminus: Small ribosomal subunit protein uS10 (102 aa).

The protein belongs to the universal ribosomal protein uS10 family. In terms of assembly, part of the 30S ribosomal subunit.

Involved in the binding of tRNA to the ribosomes. This is Small ribosomal subunit protein uS10 from Streptococcus equi subsp. zooepidemicus (strain MGCS10565).